We begin with the raw amino-acid sequence, 168 residues long: Photosystem I assembly protein Ycf3 (168 aa).

3 TPR repeats span residues 35–68, 72–105, and 120–153; these read AFAY…EIDP, SYIL…NPFL, and GEQA…TPGN.

Belongs to the Ycf3 family.

The protein localises to the plastid. Its subcellular location is the chloroplast thylakoid membrane. Essential for the assembly of the photosystem I (PSI) complex. May act as a chaperone-like factor to guide the assembly of the PSI subunits. In Morus indica (Mulberry), this protein is Photosystem I assembly protein Ycf3.